The sequence spans 182 residues: Receptor activity-modifying protein 2 (182 aa).

The first 45 residues, 1–45, serve as a signal peptide directing secretion; it reads MAPLRVERAPGGSQLAVTSAQRPAALRLPPLLLLLLLLLLGAVST. At 46–150 the chain is on the extracellular side; it reads SPESLNQSHP…VQPTFSDPPE (105 aa). N-linked (GlcNAc...) asparagine glycans are attached at residues asparagine 51, asparagine 92, and asparagine 137. 2 disulfide bridges follow: cysteine 76/cysteine 106 and cysteine 91/cysteine 138. The chain crosses the membrane as a helical span at residues 151–172; the sequence is DVLLAMIIAPICLIPFLVTLVV. Residues 173 to 182 are Cytoplasmic-facing; the sequence is WRSKDGDAQA.

It belongs to the RAMP family. As to quaternary structure, heterodimer of CALCRL and RAMP2; the interaction forms the receptor complex for adrenomedullin/ADM. Heterodimer of CALCR and RAMP2; interaction forms the AMYR2 receptor complex for calcitonin/CALC and amylin/IAPP.

It localises to the cell membrane. In terms of biological role, accessory protein that interacts with and modulates the function of G-protein coupled receptors including calcitonin gene-related peptide type 1 receptor (CALCRL) and calcitonin receptor (CALCR). Required for the transport of CALCRL to the plasma membrane. Together with CALCRL, form a receptor complex for adrenomedullin/ADM. Together with CALCR, act as a receptor complex for calcitonin/CT/CALC. Together with CALCR, also act as a receptor complex for amylin/IAPP. The chain is Receptor activity-modifying protein 2 from Rattus norvegicus (Rat).